The chain runs to 609 residues: Arginine--tRNA ligase (609 aa).

The 'HIGH' region motif lies at 114-124; that stretch reads VNPNKELHVGH.

It belongs to the class-I aminoacyl-tRNA synthetase family. Monomer.

The protein localises to the cytoplasm. It carries out the reaction tRNA(Arg) + L-arginine + ATP = L-arginyl-tRNA(Arg) + AMP + diphosphate. The sequence is that of Arginine--tRNA ligase from Deinococcus radiodurans (strain ATCC 13939 / DSM 20539 / JCM 16871 / CCUG 27074 / LMG 4051 / NBRC 15346 / NCIMB 9279 / VKM B-1422 / R1).